The sequence spans 366 residues: Cyclin-O protein A (366 aa).

Disordered regions lie at residues 18-55 (AAFS…GIKK) and 80-99 (YETP…PYDS).

This sequence belongs to the cyclin family.

It localises to the cytoplasm. Its function is as follows. Specifically required for generation of multiciliated cells, possibly by promoting a cell cycle state compatible with centriole amplification and maturation. Acts downstream of mcidas to promote mother centriole amplification and maturation in preparation for apical docking. The protein is Cyclin-O protein A (ccno-a) of Xenopus laevis (African clawed frog).